The chain runs to 375 residues: Growth/differentiation factor 8 (375 aa).

The signal sequence occupies residues methionine 1–leucine 23. The propeptide occupies asparagine 24 to arginine 266. N-linked (GlcNAc...) asparagine glycosylation is found at asparagine 48 and asparagine 71. Disulfide bonds link cysteine 272–cysteine 282, cysteine 281–cysteine 340, cysteine 309–cysteine 372, and cysteine 313–cysteine 374.

This sequence belongs to the TGF-beta family. In terms of assembly, homodimer; disulfide-linked. Interacts with WFIKKN2, leading to inhibit its activity. Interacts with FSTL3. Synthesized as large precursor molecule that undergoes proteolytic cleavage to generate an N-terminal propeptide and a disulfide linked C-terminal dimer, which is the biologically active molecule. The circulating form consists of a latent complex of the C-terminal dimer and other proteins, including its propeptide, which maintain the C-terminal dimer in a latent, inactive state. Ligand activation requires additional cleavage of the prodomain by a tolloid-like metalloproteinase.

It localises to the secreted. Functionally, acts specifically as a negative regulator of skeletal muscle growth. In Ovis aries (Sheep), this protein is Growth/differentiation factor 8 (MSTN).